The following is a 569-amino-acid chain: AP-4 complex accessory subunit Tepsin (569 aa).

The region spanning 8–141 (RDRLSFLHRL…FSDALPQPPS (134 aa)) is the ENTH domain. Residues 196-298 (VRPGPDNPCT…SGASREPGDL (103 aa)) form a disordered region. Polar residues predominate over residues 219–229 (VTPSASHTHPN). Residues 260 to 292 (SSPSSQNSSCTSNLSRASDSVSRSGSDSHSGAS) show a composition bias toward low complexity. Ser-400 is modified (phosphoserine). The interval 467–524 (VPRSPVPTPSPDTLPPALQDPGELRTQLVCSSEPGTGSEQRLENTDTPKDSSSPCPWS) is disordered. The span at 470–480 (SPVPTPSPDTL) shows a compositional bias: pro residues. Polar residues predominate over residues 494 to 505 (LVCSSEPGTGSE). Over residues 506–515 (QRLENTDTPK) the composition is skewed to basic and acidic residues. The interval 525 to 535 (PNSLFAGMELV) is interaction with AP4B1. The tract at residues 559 to 569 (SEPSAFAFLNM) is interaction with AP4E1.

In terms of assembly, interacts with AP4B1 and AP4E1; the interaction is direct and mediates the association of TEPSIN with the adapter-like complex 4 (AP-4), a heterotetramer composed of AP4B1, AP4E1, AP4M1 and AP4S1.

The protein localises to the golgi apparatus. The protein resides in the trans-Golgi network membrane. It localises to the cytoplasmic vesicle. Its subcellular location is the cytoplasm. It is found in the cytosol. In terms of biological role, associates with the adapter-like complex 4 (AP-4) and may therefore play a role in vesicular trafficking of proteins at the trans-Golgi network. The polypeptide is AP-4 complex accessory subunit Tepsin (Rattus norvegicus (Rat)).